A 175-amino-acid polypeptide reads, in one-letter code: Putative adenylate cyclase MJ0240 (175 aa).

In terms of domain architecture, CYTH spans 1–175; the sequence is MIEVEIKVKI…RKSYLELRGL (175 aa). Catalysis depends on tyrosine 37, which acts as the Proton acceptor.

The protein belongs to the adenylyl cyclase CyaB family.

It is found in the cytoplasm. The catalysed reaction is ATP = 3',5'-cyclic AMP + diphosphate. Could catalyze the biosynthesis of cyclic AMP (cAMP) from ATP. The polypeptide is Putative adenylate cyclase MJ0240 (Methanocaldococcus jannaschii (strain ATCC 43067 / DSM 2661 / JAL-1 / JCM 10045 / NBRC 100440) (Methanococcus jannaschii)).